We begin with the raw amino-acid sequence, 854 residues long: Protein asteroid (854 aa).

A disordered region spans residues 368–427 (SEEECSDDEHSSSSDEKFSDVEEGEDQEEADNQDEEQQEENQDVDSGDEEEEEADEGLEL). Over residues 375–387 (DEHSSSSDEKFSD) the composition is skewed to basic and acidic residues. Residues 388-427 (VEEGEDQEEADNQDEEQQEENQDVDSGDEEEEEADEGLEL) show a composition bias toward acidic residues.

It belongs to the asteroid family. As to expression, expressed in the proliferative tissues of embryos and in the mitotically active tissue anterior to the morphogenetic furrow in eye imaginal disks.

Functionally, may function in EGF receptor signaling. May play a role in compound eye morphogenesis. In Drosophila melanogaster (Fruit fly), this protein is Protein asteroid (ast).